The sequence spans 355 residues: Protein RecA (355 aa).

65 to 72 serves as a coordination point for ATP; it reads GPESSGKT.

This sequence belongs to the RecA family.

It is found in the cytoplasm. Can catalyze the hydrolysis of ATP in the presence of single-stranded DNA, the ATP-dependent uptake of single-stranded DNA by duplex DNA, and the ATP-dependent hybridization of homologous single-stranded DNAs. It interacts with LexA causing its activation and leading to its autocatalytic cleavage. The protein is Protein RecA of Pseudomonas putida (strain GB-1).